The chain runs to 290 residues: 4-diphosphocytidyl-2-C-methyl-D-erythritol kinase (290 aa).

Residue Lys10 is part of the active site. 95–105 (PVAAGLAGGSS) provides a ligand contact to ATP. Asp137 is a catalytic residue.

Belongs to the GHMP kinase family. IspE subfamily.

The enzyme catalyses 4-CDP-2-C-methyl-D-erythritol + ATP = 4-CDP-2-C-methyl-D-erythritol 2-phosphate + ADP + H(+). Its pathway is isoprenoid biosynthesis; isopentenyl diphosphate biosynthesis via DXP pathway; isopentenyl diphosphate from 1-deoxy-D-xylulose 5-phosphate: step 3/6. In terms of biological role, catalyzes the phosphorylation of the position 2 hydroxy group of 4-diphosphocytidyl-2C-methyl-D-erythritol. The chain is 4-diphosphocytidyl-2-C-methyl-D-erythritol kinase from Geobacillus thermodenitrificans (strain NG80-2).